The chain runs to 152 residues: Ribosome maturation factor RimP (152 aa).

It belongs to the RimP family.

It is found in the cytoplasm. Required for maturation of 30S ribosomal subunits. This Serratia proteamaculans (strain 568) protein is Ribosome maturation factor RimP.